We begin with the raw amino-acid sequence, 63 residues long: uncharacterized protein (63 aa).

This is an uncharacterized protein from Bacillus subtilis (strain 168).